The following is a 225-amino-acid chain: Pyridoxine/pyridoxamine 5'-phosphate oxidase (225 aa).

Residues 9-12 and Lys78 each bind substrate; that span reads RVDY. Residues 73–78, 88–89, Lys95, and Gln117 contribute to the FMN site; these read RTVLCK and YT. Residues Tyr135, Arg139, and Ser143 each coordinate substrate. FMN contacts are provided by residues 152 to 153 and Trp198; that span reads QS. 204-206 is a binding site for substrate; sequence RLH. Residue Arg208 participates in FMN binding.

This sequence belongs to the pyridoxamine 5'-phosphate oxidase family. Homodimer. FMN is required as a cofactor.

It carries out the reaction pyridoxamine 5'-phosphate + O2 + H2O = pyridoxal 5'-phosphate + H2O2 + NH4(+). It catalyses the reaction pyridoxine 5'-phosphate + O2 = pyridoxal 5'-phosphate + H2O2. Its pathway is cofactor metabolism; pyridoxal 5'-phosphate salvage; pyridoxal 5'-phosphate from pyridoxamine 5'-phosphate: step 1/1. It participates in cofactor metabolism; pyridoxal 5'-phosphate salvage; pyridoxal 5'-phosphate from pyridoxine 5'-phosphate: step 1/1. Its function is as follows. Catalyzes the oxidation of either pyridoxine 5'-phosphate (PNP) or pyridoxamine 5'-phosphate (PMP) into pyridoxal 5'-phosphate (PLP). This is Pyridoxine/pyridoxamine 5'-phosphate oxidase from Nocardia farcinica (strain IFM 10152).